The chain runs to 173 residues: Translationally-controlled tumor protein homolog (173 aa).

Positions 1-173 (MIIYKDILTG…WKHGLEEYKV (173 aa)) constitute a TCTP domain.

It belongs to the TCTP family.

The protein localises to the cytoplasm. The protein resides in the cytoskeleton. Functionally, involved in protein synthesis. Involved in microtubule stabilization. This Aspergillus oryzae (strain ATCC 42149 / RIB 40) (Yellow koji mold) protein is Translationally-controlled tumor protein homolog.